The following is a 213-amino-acid chain: Na(+)-translocating NADH-quinone reductase subunit D (213 aa).

The next 6 membrane-spanning stretches (helical) occupy residues 22–42, 43–63, 77–97, 101–121, 131–151, and 183–203; these read LIAILGICSALAVTTTVTTAL, TMGFAVSFVTGCSSFVVSLLR, IIISLFVILIDQFLKAFFFTI, LSVFVGLIITNCIVMGRAESM, FLDGLGSGLGYGWVLVCISII, and LGLMVLAPSAFFLLGIMIWIV.

It belongs to the NqrDE/RnfAE family. In terms of assembly, composed of six subunits; NqrA, NqrB, NqrC, NqrD, NqrE and NqrF.

The protein localises to the cell inner membrane. It catalyses the reaction a ubiquinone + n Na(+)(in) + NADH + H(+) = a ubiquinol + n Na(+)(out) + NAD(+). NQR complex catalyzes the reduction of ubiquinone-1 to ubiquinol by two successive reactions, coupled with the transport of Na(+) ions from the cytoplasm to the periplasm. NqrA to NqrE are probably involved in the second step, the conversion of ubisemiquinone to ubiquinol. This Chlamydia trachomatis serovar A (strain ATCC VR-571B / DSM 19440 / HAR-13) protein is Na(+)-translocating NADH-quinone reductase subunit D.